The sequence spans 322 residues: MAPKATKAEKKIVYDGKLCQLLDEYTQILVVNADNVGSKQLQNIRQGLRGDSVVLMGKNTMMKRSVRIHAEKTGNQAFLNLIPLLIGNVGLIFTKGYLKEVSEEVAKYKVGAPACVGLVAPIDVVVPPGNTGLDPSQTSFFQVLNIPTKINKGTVEIITPVELIKKGDKVGSSEAALLAKLGIRPFSYGLVVLSVYDNGSVFKPEVLDLTEDDLLEKFAIGVSQCYFSDTSHFIPNPSAAPHVFINAYKNVLAVAVATEYSFPQADEVKEYLKDPSKFAAVAAAAAPAADSGAAPAAAAKAEKEEEPAEESDDEMGFGLFDE.

A disordered region spans residues 294-322 (APAAAAKAEKEEEPAEESDDEMGFGLFDE). Acidic residues predominate over residues 304 to 322 (EEEPAEESDDEMGFGLFDE).

This sequence belongs to the universal ribosomal protein uL10 family. In terms of assembly, P0 forms a pentameric complex by interaction with dimers of P1 and P2. Post-translationally, phosphorylated.

Ribosomal protein P0 is the functional equivalent of E.coli protein L10. The polypeptide is Large ribosomal subunit protein uL10 (Lupinus luteus (European yellow lupine)).